The sequence spans 146 residues: UPF0260 protein Sbal_1871 (146 aa).

Belongs to the UPF0260 family.

The polypeptide is UPF0260 protein Sbal_1871 (Shewanella baltica (strain OS155 / ATCC BAA-1091)).